The sequence spans 1793 residues: Non-reducing polyketide synthase adaA (1793 aa).

The N-terminal acylcarrier protein transacylase domain (SAT) stretch occupies residues 16-250; the sequence is NDDLKALFRG…YSKSLALPVY (235 aa). The region spanning 388–821 is the Ketosynthase family 3 (KS3) domain; the sequence is DSKLAIVGMA…GGNTTLVLED (434 aa). Catalysis depends on for beta-ketoacyl synthase activity residues Cys-561, His-696, and His-739. The interval 923 to 1245 is malonyl-CoA:ACP transacylase (MAT) domain; it reads VFTFTGQGAY…KSLCTLHLAG (323 aa). The product template (PT) domain stretch occupies residues 1312–1634; the sequence is TSLIHQVTEE…RLLMDRFFSP (323 aa). Residues 1316-1452 form an N-terminal hotdog fold region; that stretch reads HQVTEETVDK…GSIKYPADPT (137 aa). The 314-residue stretch at 1316 to 1629 folds into the PKS/mFAS DH domain; sequence HQVTEETVDK…FRRVPRLLMD (314 aa). Catalysis depends on His-1348, which acts as the Proton acceptor; for dehydratase activity. The tract at residues 1482 to 1629 is C-terminal hotdog fold; sequence KASTLSKPLA…FRRVPRLLMD (148 aa). Asp-1540 serves as the catalytic Proton donor; for dehydratase activity. Over residues 1642–1659 the composition is skewed to low complexity; that stretch reads AAPAPAPAAVPAVKKQPP. The tract at residues 1642–1714 is disordered; it reads AAPAPAPAAV…TTEQEAPVAD (73 aa). A compositionally biased stretch (polar residues) spans 1660–1681; the sequence is TETIQPQAPKTEQKQDQLQLPN. Residues 1683–1706 show a composition bias toward low complexity; it reads ASAAPSTANSSSSPSSSGVATPTT. The Carrier domain maps to 1716–1793; that stretch reads SAVTGVAGKC…DLTGWLEQYC (78 aa). Residue Ser-1753 is modified to O-(pantetheine 4'-phosphoryl)serine.

Requires pantetheine 4'-phosphate as cofactor.

It carries out the reaction holo-[ACP] + 9 malonyl-CoA + acetyl-CoA + 9 H(+) = 3-(2,4-dioxopentyl)-3,6,8,9-tetrahydroxy-1-oxo-1,2,3,4-tetrahydroanthracene-2-carboxyl-[ACP] + 9 CO2 + 10 CoA + 2 H2O. It participates in secondary metabolite biosynthesis. Its function is as follows. Non-reducing polyketide synthase; part of the gene cluster that mediates the biosynthesis of the linear tetracyclic TAN-1612 neuropeptide Y receptor antagonist. The decaketide backbone of TAN-1612 is synthesized by the non-reducing polyketide synthase adaA via condensation of one acetyl-CoA starter unit with 9 malonyl-CoA units. The FAD-dependent monooxygenase adaC then performs hydroxylation at C2 while the polaketide chain is still attached to the NRPKS adaA. The alpha-hydroxylation step at C2 appears to be crucial for the following C18-C1 Claisen cyclization and release of the C9-hydroxyl version of TAN-1612 from the NRPKS adaA, two steps performed by the lactamase-like protein adaB. Finally, the O-methyltransferase adaD performs the C9 O-methylation to complete the biosynthesis of TAN-1612. This is Non-reducing polyketide synthase adaA from Aspergillus niger (strain ATCC MYA-4892 / CBS 513.88 / FGSC A1513).